A 465-amino-acid chain; its full sequence is Na(+)-translocating NADH-quinone reductase subunit A (465 aa).

This sequence belongs to the NqrA family. Composed of six subunits; NqrA, NqrB, NqrC, NqrD, NqrE and NqrF.

The enzyme catalyses a ubiquinone + n Na(+)(in) + NADH + H(+) = a ubiquinol + n Na(+)(out) + NAD(+). Its function is as follows. NQR complex catalyzes the reduction of ubiquinone-1 to ubiquinol by two successive reactions, coupled with the transport of Na(+) ions from the cytoplasm to the periplasm. NqrA to NqrE are probably involved in the second step, the conversion of ubisemiquinone to ubiquinol. The sequence is that of Na(+)-translocating NADH-quinone reductase subunit A from Chlamydia trachomatis serovar L2 (strain ATCC VR-902B / DSM 19102 / 434/Bu).